A 201-amino-acid chain; its full sequence is Potassium-transporting ATPase KdpC subunit (201 aa).

A helical membrane pass occupies residues 10 to 30 (VVLVVLTVICGLAYPLAMTGI). Positions 67–105 (HGRPSATSAADPADPTKTVSSPYNAANSSGSNLGPTSKA) are disordered. A compositionally biased stretch (low complexity) spans 70-82 (PSATSAADPADPT). A compositionally biased stretch (polar residues) spans 83 to 105 (KTVSSPYNAANSSGSNLGPTSKA).

The protein belongs to the KdpC family. The system is composed of three essential subunits: KdpA, KdpB and KdpC.

It localises to the cell inner membrane. In terms of biological role, part of the high-affinity ATP-driven potassium transport (or Kdp) system, which catalyzes the hydrolysis of ATP coupled with the electrogenic transport of potassium into the cytoplasm. This subunit acts as a catalytic chaperone that increases the ATP-binding affinity of the ATP-hydrolyzing subunit KdpB by the formation of a transient KdpB/KdpC/ATP ternary complex. This is Potassium-transporting ATPase KdpC subunit from Rhodopseudomonas palustris (strain BisB5).